The following is a 212-amino-acid chain: Large ribosomal subunit protein uL3 (212 aa).

The segment covering 136–155 (THGNSLSHRSNGSIGQNQTP) has biased composition (polar residues). Positions 136-157 (THGNSLSHRSNGSIGQNQTPGR) are disordered. An N5-methylglutamine modification is found at Q153.

Belongs to the universal ribosomal protein uL3 family. In terms of assembly, part of the 50S ribosomal subunit. Forms a cluster with proteins L14 and L19. Post-translationally, methylated by PrmB.

In terms of biological role, one of the primary rRNA binding proteins, it binds directly near the 3'-end of the 23S rRNA, where it nucleates assembly of the 50S subunit. The polypeptide is Large ribosomal subunit protein uL3 (Shewanella putrefaciens (strain CN-32 / ATCC BAA-453)).